Consider the following 113-residue polypeptide: Hemerythrin (113 aa).

Residues histidine 25, histidine 54, glutamate 58, histidine 73, histidine 77, histidine 101, and aspartate 106 each coordinate Fe cation.

Belongs to the hemerythrin family. As to quaternary structure, homotrimer.

In terms of biological role, hemerythrin is a respiratory protein in blood cells of certain marine worms. The oxygen-binding site in each chain contains two iron atoms. The protein is Hemerythrin of Siphonosoma cumanense (Sipunculan worm).